The chain runs to 109 residues: Flagellar hook-basal body complex protein FliE 2 (109 aa).

The protein belongs to the FliE family.

Its subcellular location is the bacterial flagellum basal body. The polypeptide is Flagellar hook-basal body complex protein FliE 2 (fliE2) (Bradyrhizobium diazoefficiens (strain JCM 10833 / BCRC 13528 / IAM 13628 / NBRC 14792 / USDA 110)).